The chain runs to 633 residues: Probable potassium transport system protein Kup 3 (633 aa).

The next 11 membrane-spanning stretches (helical) occupy residues 61–81 (LVSL…VLFL), 107–127 (PVLM…DAMI), 143–163 (VAPA…LLLF), 173–193 (VSVF…AAGV), 211–231 (AIGF…AIFL), 255–275 (WFAV…ALVL), 287–307 (LMFP…GTII), 345–365 (IYLP…MLMF), 371–391 (LAPA…ILAF), 402–422 (ALTA…FLGA), and 427–447 (IHHG…MMWT).

The protein belongs to the HAK/KUP transporter (TC 2.A.72) family.

Its subcellular location is the cell inner membrane. The enzyme catalyses K(+)(in) + H(+)(in) = K(+)(out) + H(+)(out). In terms of biological role, transport of potassium into the cell. Likely operates as a K(+):H(+) symporter. This is Probable potassium transport system protein Kup 3 from Sinorhizobium medicae (strain WSM419) (Ensifer medicae).